The following is a 248-amino-acid chain: 3-deoxy-manno-octulosonate cytidylyltransferase (248 aa).

Belongs to the KdsB family.

The protein localises to the cytoplasm. It catalyses the reaction 3-deoxy-alpha-D-manno-oct-2-ulosonate + CTP = CMP-3-deoxy-beta-D-manno-octulosonate + diphosphate. It functions in the pathway nucleotide-sugar biosynthesis; CMP-3-deoxy-D-manno-octulosonate biosynthesis; CMP-3-deoxy-D-manno-octulosonate from 3-deoxy-D-manno-octulosonate and CTP: step 1/1. Its pathway is bacterial outer membrane biogenesis; lipopolysaccharide biosynthesis. Functionally, activates KDO (a required 8-carbon sugar) for incorporation into bacterial lipopolysaccharide in Gram-negative bacteria. The sequence is that of 3-deoxy-manno-octulosonate cytidylyltransferase from Shigella flexneri.